The chain runs to 795 residues: Phenylalanine--tRNA ligase beta subunit (795 aa).

Residues 39-148 (ADEFHTVVVG…ADAPVGEDYR (110 aa)) enclose the tRNA-binding domain. In terms of domain architecture, B5 spans 401–476 (PKRDGITLRA…RVYGYNSIQA (76 aa)). Positions 454, 460, 463, and 464 each coordinate Mg(2+). Residues 701–794 (SRYPSIRRDL…LKSEFNATLR (94 aa)) enclose the FDX-ACB domain.

It belongs to the phenylalanyl-tRNA synthetase beta subunit family. Type 1 subfamily. As to quaternary structure, tetramer of two alpha and two beta subunits. Mg(2+) is required as a cofactor.

Its subcellular location is the cytoplasm. It catalyses the reaction tRNA(Phe) + L-phenylalanine + ATP = L-phenylalanyl-tRNA(Phe) + AMP + diphosphate + H(+). This is Phenylalanine--tRNA ligase beta subunit from Idiomarina loihiensis (strain ATCC BAA-735 / DSM 15497 / L2-TR).